Consider the following 174-residue polypeptide: Scytalone dehydratase-like protein Arp1 (174 aa).

Position 49 (Tyr49) interacts with substrate. Residues His84 and His109 contribute to the active site. Residue Asn130 participates in substrate binding.

The protein belongs to the scytalone dehydratase family. Homotrimer. Each subunit contains an active site, located in the central part of the hydrophobic core of the monomer, which functions independently.

Scytalone dehydratase-like protein; part of the Pks2 gene cluster that mediates the formation of infectious structures (appressoria), enabling these fungi to kill insects faster. The product of the Pks2 gene cluster is different from the one of Pks1 and has still not been identified. This Metarhizium majus (strain ARSEF 297) protein is Scytalone dehydratase-like protein Arp1.